The following is a 109-amino-acid chain: Large ribosomal subunit protein bL19 (109 aa).

This sequence belongs to the bacterial ribosomal protein bL19 family.

This protein is located at the 30S-50S ribosomal subunit interface and may play a role in the structure and function of the aminoacyl-tRNA binding site. The sequence is that of Large ribosomal subunit protein bL19 from Rubrobacter xylanophilus (strain DSM 9941 / JCM 11954 / NBRC 16129 / PRD-1).